A 311-amino-acid chain; its full sequence is Acetyl-coenzyme A carboxylase carboxyl transferase subunit alpha (311 aa).

In terms of domain architecture, CoA carboxyltransferase C-terminal spans 36 to 286 (ELKKEVERVY…VNYFLKSLEE (251 aa)).

It belongs to the AccA family. As to quaternary structure, acetyl-CoA carboxylase is a heterohexamer composed of biotin carboxyl carrier protein (AccB), biotin carboxylase (AccC) and two subunits each of ACCase subunit alpha (AccA) and ACCase subunit beta (AccD).

Its subcellular location is the cytoplasm. It catalyses the reaction N(6)-carboxybiotinyl-L-lysyl-[protein] + acetyl-CoA = N(6)-biotinyl-L-lysyl-[protein] + malonyl-CoA. It participates in lipid metabolism; malonyl-CoA biosynthesis; malonyl-CoA from acetyl-CoA: step 1/1. Its function is as follows. Component of the acetyl coenzyme A carboxylase (ACC) complex. First, biotin carboxylase catalyzes the carboxylation of biotin on its carrier protein (BCCP) and then the CO(2) group is transferred by the carboxyltransferase to acetyl-CoA to form malonyl-CoA. This is Acetyl-coenzyme A carboxylase carboxyl transferase subunit alpha from Wolinella succinogenes (strain ATCC 29543 / DSM 1740 / CCUG 13145 / JCM 31913 / LMG 7466 / NCTC 11488 / FDC 602W) (Vibrio succinogenes).